Reading from the N-terminus, the 170-residue chain is Negative modulator of initiation of replication (170 aa).

The tract at residues 139–145 is interaction with DNA; the sequence is NTNTGRK.

This sequence belongs to the SeqA family. As to quaternary structure, homodimer. Polymerizes to form helical filaments.

The protein localises to the cytoplasm. Functionally, negative regulator of replication initiation, which contributes to regulation of DNA replication and ensures that replication initiation occurs exactly once per chromosome per cell cycle. Binds to pairs of hemimethylated GATC sequences in the oriC region, thus preventing assembly of replication proteins and re-initiation at newly replicated origins. Repression is relieved when the region becomes fully methylated. This chain is Negative modulator of initiation of replication, found in Tolumonas auensis (strain DSM 9187 / NBRC 110442 / TA 4).